An 816-amino-acid chain; its full sequence is Homeobox-leucine zipper protein ROC9 (816 aa).

A disordered region spans residues Val26–Ala104. Over residues Lys92 to Arg101 the composition is skewed to basic residues. Residues Arg95–Gln154 constitute a DNA-binding region (homeobox). The stretch at Gln149–Lys182 forms a coiled coil. The disordered stretch occupies residues Lys265–Asp296. The START domain occupies His302–Phe541.

It belongs to the HD-ZIP homeobox family. Class IV subfamily.

It localises to the nucleus. Functionally, probable transcription factor. This chain is Homeobox-leucine zipper protein ROC9 (ROC9), found in Oryza sativa subsp. japonica (Rice).